We begin with the raw amino-acid sequence, 162 residues long: Ecotin (162 aa).

The signal sequence occupies residues 1-18 (MFVPAVVFAALASTSAWA). Cys70 and Cys107 are joined by a disulfide.

The protein belongs to the protease inhibitor I11 (ecotin) family. As to quaternary structure, homodimer.

Its subcellular location is the periplasm. General inhibitor of pancreatic serine proteases: inhibits chymotrypsin, trypsin, elastases, factor X, kallikrein as well as a variety of other proteases. The protein is Ecotin of Salmonella choleraesuis (strain SC-B67).